Here is a 381-residue protein sequence, read N- to C-terminus: Gustatory and pheromone receptor 39a, isoform D (381 aa).

The Cytoplasmic segment spans residues methionine 1–alanine 43. Residues tryptophan 44–phenylalanine 64 traverse the membrane as a helical segment. Residues proline 65 to asparagine 78 lie on the Extracellular side of the membrane. Asparagine 74 is a glycosylation site (N-linked (GlcNAc...) asparagine). A helical transmembrane segment spans residues cysteine 79–isoleucine 101. The Cytoplasmic portion of the chain corresponds to glutamine 102 to arginine 128. Residues phenylalanine 129–tyrosine 149 traverse the membrane as a helical segment. Over glycine 150–tyrosine 172 the chain is Extracellular. A helical transmembrane segment spans residues leucine 173–leucine 193. The Cytoplasmic portion of the chain corresponds to lysine 194–cysteine 234. The helical transmembrane segment at phenylalanine 235–phenylalanine 255 threads the bilayer. Topologically, residues tyrosine 256–serine 273 are extracellular. Residues leucine 274–methionine 294 traverse the membrane as a helical segment. Residues glycine 295–threonine 350 are Cytoplasmic-facing. Residues leucine 351–methionine 371 traverse the membrane as a helical segment. The Extracellular portion of the chain corresponds to glutamate 372 to phenylalanine 381. Asparagine 373 carries N-linked (GlcNAc...) asparagine glycosylation.

It belongs to the insect chemoreceptor superfamily. Gustatory receptor (GR) family. Gr21a subfamily. As to expression, expressed in the adult labellar chemosensory neurons and adult thorax and abdomen.

Its subcellular location is the cell membrane. Its function is as follows. Gustatory receptor which mediates acceptance or avoidance behavior, depending on its substrates. Plays a role in sustaining courtship behavior in males, possibly through the reception of a stimulating arrestant pheromone. The protein is Gustatory and pheromone receptor 39a, isoform D (Gr39a) of Drosophila melanogaster (Fruit fly).